The following is a 302-amino-acid chain: Deoxyribonuclease-1-like 1 (302 aa).

The signal sequence occupies residues 1-18 (MHYPTALLFLILANGAQA). Active-site residues include glutamate 97 and histidine 148. An intrachain disulfide couples cysteine 187 to cysteine 224. N-linked (GlcNAc...) asparagine glycosylation is present at asparagine 261.

Belongs to the DNase I family. As to expression, highest levels in skeletal and cardiac muscles. Detectable in all other tissues tested except brain.

Its subcellular location is the endoplasmic reticulum. The protein is Deoxyribonuclease-1-like 1 (DNASE1L1) of Homo sapiens (Human).